A 243-amino-acid chain; its full sequence is Methylthioribulose-1-phosphate dehydratase (243 aa).

Cysteine 90 lines the substrate pocket. Zn(2+)-binding residues include histidine 108 and histidine 110. Catalysis depends on glutamate 131, which acts as the Proton donor/acceptor. Histidine 193 lines the Zn(2+) pocket.

This sequence belongs to the aldolase class II family. MtnB subfamily. It depends on Zn(2+) as a cofactor.

Its subcellular location is the cytoplasm. It carries out the reaction 5-(methylsulfanyl)-D-ribulose 1-phosphate = 5-methylsulfanyl-2,3-dioxopentyl phosphate + H2O. The protein operates within amino-acid biosynthesis; L-methionine biosynthesis via salvage pathway; L-methionine from S-methyl-5-thio-alpha-D-ribose 1-phosphate: step 2/6. In terms of biological role, catalyzes the dehydration of methylthioribulose-1-phosphate (MTRu-1-P) into 2,3-diketo-5-methylthiopentyl-1-phosphate (DK-MTP-1-P). The polypeptide is Methylthioribulose-1-phosphate dehydratase (Zygosaccharomyces rouxii (strain ATCC 2623 / CBS 732 / NBRC 1130 / NCYC 568 / NRRL Y-229)).